The chain runs to 248 residues: MAGHSQFKNIMHRKGRQDAVRSKMFSKLAREITVAAKSGMPDPAMNPRLRLAIQNAKAQSMPKDNIERAVKKAAGGDAENYEEVRYEGYGPGGVAVIVEALTDNRNRTASNVRSMFTKAGGALGETGSVSFSFDRVGEITYTLSAGDADKVMEAAIESGADDVTTDEDGHTILCGFEEIGDVSKALEGVLGEAETVKAIWKPQNTVPVDEEKAQSLMKLIDNLEDDDDVQNVYSNFEVSEEVLAKLSA.

This sequence belongs to the TACO1 family.

It is found in the cytoplasm. This is Probable transcriptional regulatory protein NGR_c27950 from Sinorhizobium fredii (strain NBRC 101917 / NGR234).